A 288-amino-acid polypeptide reads, in one-letter code: MILEGKTLAAAIRENLPARAQICKTKLGRPLKLTGIGWAADYASYVYLDKEIKAAEKTGITGEVIDITEQTSHEEMLNIIKKLSTDETVDAVIVPKPLPRHLNTLEIWEALNPLKDIDGSSVLNMGRLFMCKNWAEVEAMQGFAPATAMAVIKLLDFYKIKLSGVETGVLGRSATVGKPLAHMLSCKDATVKICHSKTPSLTSSLSQCDIVISAIGKAKFVTENMVKTGAMVIDVGTNQDENGVFCGDVDFENVKKITSAITPVPGGVGPVTLACLLENIIISGERKL.

Residues 171-173 (GRS), Ser-196, and Thr-237 each bind NADP(+).

The protein belongs to the tetrahydrofolate dehydrogenase/cyclohydrolase family. As to quaternary structure, homodimer.

The enzyme catalyses (6R)-5,10-methylene-5,6,7,8-tetrahydrofolate + NADP(+) = (6R)-5,10-methenyltetrahydrofolate + NADPH. The catalysed reaction is (6R)-5,10-methenyltetrahydrofolate + H2O = (6R)-10-formyltetrahydrofolate + H(+). The protein operates within one-carbon metabolism; tetrahydrofolate interconversion. In terms of biological role, catalyzes the oxidation of 5,10-methylenetetrahydrofolate to 5,10-methenyltetrahydrofolate and then the hydrolysis of 5,10-methenyltetrahydrofolate to 10-formyltetrahydrofolate. The polypeptide is Bifunctional protein FolD (Elusimicrobium minutum (strain Pei191)).